A 643-amino-acid chain; its full sequence is Cytoplasmic dynein 1 intermediate chain 1 (643 aa).

2 stretches are compositionally biased toward basic and acidic residues: residues 1 to 13 (MSDK…ELER) and 20 to 60 (QIRE…RETE). Disordered stretches follow at residues 1 to 65 (MSDK…LLQS) and 96 to 123 (MSPS…RTLQ). At S2 the chain carries N-acetylserine. The tract at residues 2–123 (SDKSDLKAEL…DLGPLTRTLQ (122 aa)) is interaction with DCTN1. Phosphoserine is present on residues S50 and S100. The span at 96 to 107 (MSPSSKSVSTPS) shows a compositional bias: low complexity. Position 105 is a phosphothreonine (T105). Residues S107 and S111 each carry the phosphoserine modification. Residues 145-161 (KLGVSKVTQVDFLPREV) are interaction with DYNLT1. Positions 167 to 219 (ETQTPLATHQSEEDEEDEEMVEPKVGHDSELENQDKKQETKEAPPRELTEEEK) are disordered. Position 174 is a phosphothreonine (T174). A phosphoserine mark is found at S177 and S195. Over residues 187-219 (VEPKVGHDSELENQDKKQETKEAPPRELTEEEK) the composition is skewed to basic and acidic residues. WD repeat units follow at residues 283 to 332 (SKHR…TTPE), 336 to 376 (HCQS…RTPV), 385 to 426 (AHTH…TPQE), 435 to 475 (SKPV…AGIG), 480 to 525 (GHQG…PLYS), 528 to 568 (DNAD…EVPT), and 574 to 613 (EGAY…VPHN). Position 633 is a phosphoserine (S633).

The protein belongs to the dynein intermediate chain family. Homodimer. The cytoplasmic dynein 1 complex consists of two catalytic heavy chains (HCs) and a number of non-catalytic subunits presented by intermediate chains (ICs), light intermediate chains (LICs) and light chains (LCs); the composition seems to vary in respect to the IC, LIC and LC composition. The heavy chain homodimer serves as a scaffold for the probable homodimeric assembly of the respective non-catalytic subunits. The ICs and LICs bind directly to the HC dimer and the LCs assemble on the IC dimer. Isoform 1, isoform 2 and isoform 3 interact with DYNC1H1. Isoform 1, isoform 2 and isoform 3 interact with DYNLT3. Isoform 1, isoform 2 and isoform 3 interact with DYNLT1. Interacts with DCTN1. Interacts with MCRS1; the interaction is required for the proper distribution of centriolar satellites. In terms of tissue distribution, high levels seen in the brain and testis, while a lower level expression is seen in the liver, spleen, kidney, lung, skeletal muscle and heart.

It localises to the cytoplasm. The protein localises to the chromosome. The protein resides in the centromere. It is found in the kinetochore. Its subcellular location is the cytoskeleton. It localises to the spindle pole. In terms of biological role, acts as one of several non-catalytic accessory components of the cytoplasmic dynein 1 complex that are thought to be involved in linking dynein to cargos and to adapter proteins that regulate dynein function. Cytoplasmic dynein 1 acts as a motor for the intracellular retrograde motility of vesicles and organelles along microtubules. The intermediate chains mediate the binding of dynein to dynactin via its 150 kDa component (p150-glued) DCTN1. May play a role in mediating the interaction of cytoplasmic dynein with membranous organelles and kinetochores. This chain is Cytoplasmic dynein 1 intermediate chain 1 (Dync1i1), found in Rattus norvegicus (Rat).